The following is a 107-amino-acid chain: Phosphoribosyl-ATP pyrophosphatase (107 aa).

It belongs to the PRA-PH family.

Its subcellular location is the cytoplasm. It carries out the reaction 1-(5-phospho-beta-D-ribosyl)-ATP + H2O = 1-(5-phospho-beta-D-ribosyl)-5'-AMP + diphosphate + H(+). Its pathway is amino-acid biosynthesis; L-histidine biosynthesis; L-histidine from 5-phospho-alpha-D-ribose 1-diphosphate: step 2/9. The sequence is that of Phosphoribosyl-ATP pyrophosphatase from Bacillus mycoides (strain KBAB4) (Bacillus weihenstephanensis).